A 170-amino-acid chain; its full sequence is Chorion protein S18 (170 aa).

The first 17 residues, 1-17 (MMKFMCIFVCAIAAVSA), serve as a signal peptide directing secretion. Positions 146 to 159 (AAAASSSVAGQHSG) are enriched in low complexity. The tract at residues 146 to 170 (AAAASSSVAGQHSGYKNSGYKNSSY) is disordered. Polar residues predominate over residues 160–170 (YKNSGYKNSSY).

Belongs to the chorion protein S15/S18 family.

It is found in the secreted. Functionally, chorion membrane (egg shell) protein; plays a role in protecting the egg from the environment. This Drosophila virilis (Fruit fly) protein is Chorion protein S18 (Cp18).